The sequence spans 590 residues: Proline--tRNA ligase (590 aa).

The protein belongs to the class-II aminoacyl-tRNA synthetase family. ProS type 1 subfamily. Homodimer.

It localises to the cytoplasm. It carries out the reaction tRNA(Pro) + L-proline + ATP = L-prolyl-tRNA(Pro) + AMP + diphosphate. Functionally, catalyzes the attachment of proline to tRNA(Pro) in a two-step reaction: proline is first activated by ATP to form Pro-AMP and then transferred to the acceptor end of tRNA(Pro). As ProRS can inadvertently accommodate and process non-cognate amino acids such as alanine and cysteine, to avoid such errors it has two additional distinct editing activities against alanine. One activity is designated as 'pretransfer' editing and involves the tRNA(Pro)-independent hydrolysis of activated Ala-AMP. The other activity is designated 'posttransfer' editing and involves deacylation of mischarged Ala-tRNA(Pro). The misacylated Cys-tRNA(Pro) is not edited by ProRS. The sequence is that of Proline--tRNA ligase from Leifsonia xyli subsp. xyli (strain CTCB07).